Reading from the N-terminus, the 63-residue chain is DNA gyrase inhibitor YacG (63 aa).

4 residues coordinate Zn(2+): cysteine 10, cysteine 13, cysteine 29, and cysteine 33.

It belongs to the DNA gyrase inhibitor YacG family. In terms of assembly, interacts with GyrB. Requires Zn(2+) as cofactor.

Its function is as follows. Inhibits all the catalytic activities of DNA gyrase by preventing its interaction with DNA. Acts by binding directly to the C-terminal domain of GyrB, which probably disrupts DNA binding by the gyrase. The protein is DNA gyrase inhibitor YacG of Chromobacterium violaceum (strain ATCC 12472 / DSM 30191 / JCM 1249 / CCUG 213 / NBRC 12614 / NCIMB 9131 / NCTC 9757 / MK).